Reading from the N-terminus, the 268-residue chain is Undecaprenyl-diphosphatase (268 aa).

The next 7 helical transmembrane spans lie at phenylalanine 47–leucine 67, phenylalanine 83–glycine 103, leucine 109–valine 129, phenylalanine 144–valine 164, alanine 184–leucine 204, leucine 217–phenylalanine 237, and phenylalanine 246–leucine 266.

Belongs to the UppP family.

It is found in the cell inner membrane. It catalyses the reaction di-trans,octa-cis-undecaprenyl diphosphate + H2O = di-trans,octa-cis-undecaprenyl phosphate + phosphate + H(+). Catalyzes the dephosphorylation of undecaprenyl diphosphate (UPP). Confers resistance to bacitracin. The sequence is that of Undecaprenyl-diphosphatase from Rhodopseudomonas palustris (strain BisB18).